Here is a 176-residue protein sequence, read N- to C-terminus: Orotate phosphoribosyltransferase (176 aa).

5-phospho-alpha-D-ribose 1-diphosphate is bound by residues arginine 90, lysine 91, lysine 94, and 116 to 124; that span reads EDVTTTGGS. Threonine 120 and arginine 148 together coordinate orotate.

This sequence belongs to the purine/pyrimidine phosphoribosyltransferase family. PyrE subfamily. Homodimer. Requires Mg(2+) as cofactor.

It catalyses the reaction orotidine 5'-phosphate + diphosphate = orotate + 5-phospho-alpha-D-ribose 1-diphosphate. It participates in pyrimidine metabolism; UMP biosynthesis via de novo pathway; UMP from orotate: step 1/2. In terms of biological role, catalyzes the transfer of a ribosyl phosphate group from 5-phosphoribose 1-diphosphate to orotate, leading to the formation of orotidine monophosphate (OMP). The chain is Orotate phosphoribosyltransferase from Methanocaldococcus jannaschii (strain ATCC 43067 / DSM 2661 / JAL-1 / JCM 10045 / NBRC 100440) (Methanococcus jannaschii).